Reading from the N-terminus, the 506-residue chain is 2-isopropylmalate synthase (506 aa).

The Pyruvate carboxyltransferase domain occupies 4–266 (ILFMDTTLRD…EPSMTLKEIK (263 aa)). Mn(2+)-binding residues include Asp13, His201, His203, and Asn237. The segment at 390–506 (NITQLQVHFV…KLKSFIQLVK (117 aa)) is regulatory domain.

It belongs to the alpha-IPM synthase/homocitrate synthase family. LeuA type 1 subfamily. Homodimer. Mn(2+) is required as a cofactor.

It is found in the cytoplasm. The catalysed reaction is 3-methyl-2-oxobutanoate + acetyl-CoA + H2O = (2S)-2-isopropylmalate + CoA + H(+). Its pathway is amino-acid biosynthesis; L-leucine biosynthesis; L-leucine from 3-methyl-2-oxobutanoate: step 1/4. Its function is as follows. Catalyzes the condensation of the acetyl group of acetyl-CoA with 3-methyl-2-oxobutanoate (2-ketoisovalerate) to form 3-carboxy-3-hydroxy-4-methylpentanoate (2-isopropylmalate). This is 2-isopropylmalate synthase from Bacillus thuringiensis (strain Al Hakam).